The following is a 377-amino-acid chain: Formate dehydrogenase, mitochondrial (377 aa).

The N-terminal 29 residues, 1–29 (MAAMWRAAARQLVDRAVGSRAAHTSAGSK), are a transit peptide targeting the mitochondrion. Residues Ile-121 and Asn-145 each contribute to the substrate site. NAD(+)-binding positions include Thr-146, Asp-220, 255-259 (PLTEK), Asn-281, Asp-307, and 331-334 (HISG).

The protein belongs to the D-isomer specific 2-hydroxyacid dehydrogenase family. FDH subfamily. As to quaternary structure, homodimer.

It localises to the mitochondrion. The catalysed reaction is formate + NAD(+) = CO2 + NADH. Functionally, catalyzes the NAD(+)-dependent oxidation of formate to carbon dioxide. Involved in the cell stress response. This Hordeum vulgare (Barley) protein is Formate dehydrogenase, mitochondrial.